The sequence spans 345 residues: Phosphoribosylformylglycinamidine cyclo-ligase (345 aa).

It belongs to the AIR synthase family.

The protein localises to the cytoplasm. It catalyses the reaction 2-formamido-N(1)-(5-O-phospho-beta-D-ribosyl)acetamidine + ATP = 5-amino-1-(5-phospho-beta-D-ribosyl)imidazole + ADP + phosphate + H(+). It participates in purine metabolism; IMP biosynthesis via de novo pathway; 5-amino-1-(5-phospho-D-ribosyl)imidazole from N(2)-formyl-N(1)-(5-phospho-D-ribosyl)glycinamide: step 2/2. The polypeptide is Phosphoribosylformylglycinamidine cyclo-ligase (Escherichia fergusonii (strain ATCC 35469 / DSM 13698 / CCUG 18766 / IAM 14443 / JCM 21226 / LMG 7866 / NBRC 102419 / NCTC 12128 / CDC 0568-73)).